The sequence spans 322 residues: Mas-related G-protein coupled receptor member X4 (322 aa).

Residues 1-31 (MDPTVPVFGTKLTPINGREETPCYNQTLSFT) lie on the Extracellular side of the membrane. The N-linked (GlcNAc...) asparagine glycan is linked to Asn25. The helical transmembrane segment at 32–52 (VLTCIISLVGLTGNAVVLWLL) threads the bilayer. Residues 53–60 (GYRMRRNA) lie on the Cytoplasmic side of the membrane. Residues 61 to 81 (VSIYILNLAAADFLFLSFQII) form a helical membrane-spanning segment. Residues 82–96 (RLPLRLINISHLIRK) lie on the Extracellular side of the membrane. The N-linked (GlcNAc...) asparagine glycan is linked to Asn89. The helical transmembrane segment at 97–117 (ILVSVMTFPYFTGLSMLSAIS) threads the bilayer. Residues 118–137 (TERCLSVLWPIWYRCRRPTH) lie on the Cytoplasmic side of the membrane. The helical transmembrane segment at 138–158 (LSAVVCVLLWGLSLLFSMLEW) threads the bilayer. Topologically, residues 159-177 (RFCDFLFSGADSSWCETSD) are extracellular. A helical membrane pass occupies residues 178-198 (FIPVAWLIFLCVVLCVSSLVL). At 199-218 (LVRILCGSRKMPLTRLYVTI) the chain is on the cytoplasmic side. The helical transmembrane segment at 219–239 (LLTVLVFLLCGLPFGILGALI) threads the bilayer. Residues 240-254 (YRMHLNLEVLYCHVY) are Extracellular-facing. Residues 255 to 275 (LVCMSLSSLNSSANPIIYFFV) form a helical membrane-spanning segment. The Cytoplasmic segment spans residues 276-322 (GSFRQRQNRQNLKLVLQRALQDKPEVDKGEGQLPEESLELSGSRLGP). A disordered region spans residues 299–322 (PEVDKGEGQLPEESLELSGSRLGP).

Belongs to the G-protein coupled receptor 1 family. Mas subfamily. In terms of tissue distribution, uniquely localized in a subset of small dorsal root and trigeminal sensory neurons.

Its subcellular location is the cell membrane. Orphan receptor. Probably involved in the function of nociceptive neurons. May regulate nociceptor function and/or development, including the sensation or modulation of pain. Potently activated by enkephalins. In Homo sapiens (Human), this protein is Mas-related G-protein coupled receptor member X4 (MRGPRX4).